Consider the following 306-residue polypeptide: Ribonuclease Z (306 aa).

His-63, His-65, Asp-67, His-68, His-141, Asp-208, and His-266 together coordinate Zn(2+). Catalysis depends on Asp-67, which acts as the Proton acceptor.

Belongs to the RNase Z family. In terms of assembly, homodimer. Zn(2+) serves as cofactor.

It catalyses the reaction Endonucleolytic cleavage of RNA, removing extra 3' nucleotides from tRNA precursor, generating 3' termini of tRNAs. A 3'-hydroxy group is left at the tRNA terminus and a 5'-phosphoryl group is left at the trailer molecule.. In terms of biological role, zinc phosphodiesterase, which displays some tRNA 3'-processing endonuclease activity. Probably involved in tRNA maturation, by removing a 3'-trailer from precursor tRNA. This Chlamydia abortus (strain DSM 27085 / S26/3) (Chlamydophila abortus) protein is Ribonuclease Z.